The primary structure comprises 125 residues: Large ribosomal subunit protein bL12 (125 aa).

Belongs to the bacterial ribosomal protein bL12 family. In terms of assembly, homodimer. Part of the ribosomal stalk of the 50S ribosomal subunit. Forms a multimeric L10(L12)X complex, where L10 forms an elongated spine to which 2 to 4 L12 dimers bind in a sequential fashion. Binds GTP-bound translation factors.

Forms part of the ribosomal stalk which helps the ribosome interact with GTP-bound translation factors. Is thus essential for accurate translation. The protein is Large ribosomal subunit protein bL12 of Campylobacter lari (strain RM2100 / D67 / ATCC BAA-1060).